The chain runs to 284 residues: Nucleotide-binding protein VSAL_I0495 (284 aa).

An ATP-binding site is contributed by 8–15 (GNSGAGKS). 56 to 59 (DIRN) lines the GTP pocket.

Belongs to the RapZ-like family.

Functionally, displays ATPase and GTPase activities. This Aliivibrio salmonicida (strain LFI1238) (Vibrio salmonicida (strain LFI1238)) protein is Nucleotide-binding protein VSAL_I0495.